Consider the following 519-residue polypeptide: tRNA-2-methylthio-N(6)-dimethylallyladenosine synthase (519 aa).

The disordered stretch occupies residues 1–23 (MNEQQRKQQSQIRTEQANVDRIK). Residues 7–17 (KQQSQIRTEQA) show a composition bias toward polar residues. An MTTase N-terminal domain is found at 76-194 (KKFLIRTYGC…LPHLVKEALF (119 aa)). The [4Fe-4S] cluster site is built by cysteine 85, cysteine 121, cysteine 155, cysteine 231, cysteine 235, and cysteine 238. The region spanning 217-450 (RKGKIKAWVN…VNKQSAASMK (234 aa)) is the Radical SAM core domain. In terms of domain architecture, TRAM spans 450–513 (KDYAGKKVKV…TWSLNGVMVE (64 aa)).

Belongs to the methylthiotransferase family. MiaB subfamily. As to quaternary structure, monomer. The cofactor is [4Fe-4S] cluster.

It is found in the cytoplasm. It carries out the reaction N(6)-dimethylallyladenosine(37) in tRNA + (sulfur carrier)-SH + AH2 + 2 S-adenosyl-L-methionine = 2-methylsulfanyl-N(6)-dimethylallyladenosine(37) in tRNA + (sulfur carrier)-H + 5'-deoxyadenosine + L-methionine + A + S-adenosyl-L-homocysteine + 2 H(+). Its function is as follows. Catalyzes the methylthiolation of N6-(dimethylallyl)adenosine (i(6)A), leading to the formation of 2-methylthio-N6-(dimethylallyl)adenosine (ms(2)i(6)A) at position 37 in tRNAs that read codons beginning with uridine. This is tRNA-2-methylthio-N(6)-dimethylallyladenosine synthase from Oceanobacillus iheyensis (strain DSM 14371 / CIP 107618 / JCM 11309 / KCTC 3954 / HTE831).